The chain runs to 576 residues: Putative export ATP-binding/permease protein RF_0214 (576 aa).

The ABC transmembrane type-1 domain occupies 20–303; the sequence is LIIVMISLLS…IFELLSEIHL (284 aa). A run of 6 helical transmembrane segments spans residues 21–41, 61–81, 135–155, 158–178, 242–262, and 277–297; these read IIVMISLLSVSASLLLIGSVF, ILYICLLIIILSIASFFRSYF, FLSFFIRNSVMLIGGVTLMFF, FKLASIVIITIPILLIPLIKF, ALFFAISIAIIFLAITLVVWI, and IISFIYYAIIAGFSSGGIFEL. One can recognise an ABC transporter domain in the interval 336–572; the sequence is IEFKNVDFTY…SEIYRNICRE (237 aa). Residue 371–378 coordinates ATP; the sequence is GRSGGGKS.

The protein belongs to the ABC transporter superfamily. In terms of assembly, homodimer.

The protein localises to the cell inner membrane. Its function is as follows. Part of an ABC transporter complex. Transmembrane domains (TMD) form a pore in the inner membrane and the ATP-binding domain (NBD) is responsible for energy generation. This chain is Putative export ATP-binding/permease protein RF_0214, found in Rickettsia felis (strain ATCC VR-1525 / URRWXCal2) (Rickettsia azadi).